Reading from the N-terminus, the 579-residue chain is Protein inscuteable homolog (579 aa).

The important for interaction with GPSM2 stretch occupies residues 74 to 89; the sequence is SVQRWMEDLKLMTECE. The PDZ-binding motif lies at 576–579; the sequence is ESFV.

As to quaternary structure, interacts with ALS2CR19/PAR3B and GPSM1/AGS3. Interacts with F2RL2/PAR3. Interacts with GPSM2/LGN (via TPR repeat region). Expressed in brain, kidney, liver, testis and skin.

The protein localises to the cytoplasm. It is found in the cell cortex. Functionally, may function as an adapter linking the Par3 complex to the GPSM1/GPSM2 complex. Involved in spindle orientation during mitosis. May regulate cell proliferation and differentiation in the developing nervous system. May play a role in the asymmetric division of fibroblasts and participate in the process of stratification of the squamous epithelium. This Mus musculus (Mouse) protein is Protein inscuteable homolog (Insc).